Reading from the N-terminus, the 377-residue chain is uncharacterized protein (377 aa).

This is an uncharacterized protein from Magallana gigas (Pacific oyster).